Consider the following 882-residue polypeptide: MTELSPKYNPAEVEAGRYQKWLDADVFKPSGDQKAKPYSIVIPPPNVTGKLHLGHAWDTTLQDIIIRQKRMQGFDTLWLPGMDHAGIATQAKVEERLREQGISRYDLGRDKFLDKVWEWKDEYATTIKEQWGKMGLSVDYSRERFTLDEGLSKAVRKVFVDLYKKGWIYRGEFIINWDPAARTALSDIEVIHKDVEGAFYHMNYMLEDDSRALQVATTRPETMFGDVAVAVNPEDPRYKDLIGKHVILPIVNKLIPIVGDEHADPEFGTGVVKITPAHDPNDFEVGQRHNLPQVNVMNDDGTMNELAGDFAGMDRFEARQATVAKLEELGALVNIEKRVHSVGHSERSGAVVEPRLSTQWFVKMDELAKQAMDNQETDDRVDFYPPRFNDTFLQWMENVHDWVISRQLWWGHQIPAWYNAEGEIYVGEEAPEGDGWTQDEDVLDTWFSSALWPFSTMGWPDTDVEDFKRYFPTSTLVTGYDIIFFWVSRMIFQSLEFTGRQPFQNVLIHGLIRDEEGRKMSKSLGNGIDPMDVIEKYGADSLRWFLSNGSAPGQDVRFSYEKMDASWNFINKIWNISRYILMNNEGLSLEEAESNVAKVAASEAGNVTDQWILHNLNETIAKVTENFDKFEFGVAGHILYNFIWEEFANWYVELTKEVLYSDNEAEKVITRSVLLYTLDKILRLLHPIMPFVTEEIYAQYAQGSIVTVDYPTVTPAFENEAAHKGVESLKDLIRAVRNARAEVNVAPSKPITILVKTADSELEDFFTSNVNYIKRFTNPEKLEISSAIAAPELAMTSIITGAEIYLPLADLLNVEEELARLDKELAKWQKELDMVGKKLGNERFVANAKPEVVQKEKDKQADYQAKYDATQERIAEMHKLVK.

Positions 45–55 (PNVTGKLHLGH) match the 'HIGH' region motif. A 'KMSKS' region motif is present at residues 519–523 (KMSKS). Lys-522 lines the ATP pocket. A coiled-coil region spans residues 808–882 (LADLLNVEEE…RIAEMHKLVK (75 aa)).

The protein belongs to the class-I aminoacyl-tRNA synthetase family. ValS type 1 subfamily. As to quaternary structure, monomer.

The protein localises to the cytoplasm. The catalysed reaction is tRNA(Val) + L-valine + ATP = L-valyl-tRNA(Val) + AMP + diphosphate. Functionally, catalyzes the attachment of valine to tRNA(Val). As ValRS can inadvertently accommodate and process structurally similar amino acids such as threonine, to avoid such errors, it has a 'posttransfer' editing activity that hydrolyzes mischarged Thr-tRNA(Val) in a tRNA-dependent manner. In Streptococcus pyogenes serotype M18 (strain MGAS8232), this protein is Valine--tRNA ligase.